Reading from the N-terminus, the 202-residue chain is UPF0301 protein ML0028 (202 aa).

This sequence belongs to the UPF0301 (AlgH) family.

The polypeptide is UPF0301 protein ML0028 (Mycobacterium leprae (strain TN)).